The sequence spans 711 residues: MLNPIVRKFQYGQHTVTLETGMMARQATAAVMVSMDDTAVFVTVVGQKKAKPGQDFFPLTVNYQERTYAAGRIPGSFFRREGRPSEGETLIARLIDRPVRPLFPEGFVNEVQVIATVVSVNPQVNPDIVAMIGASAALSLSGIPFNGPIGAARVGYINDQYVLNPTQDELKESKLDLVVAGTEAAVLMVESEAELLSEDTMLGAVVFGHEQQQVVIQAINDLVKEAGKPRWDWQPEAVNDALNARVAALAESRLSDAYRITDKQERYAQVDVIKSETIEQLIAEDETLDANELGEILHAIEKNVVRSRVLAGEPRIDGREKDMIRGLDVRTGVLPRTHGSALFTRGETQALVTATLGTARDAQVLDELMGERTDSFLFHYNFPPYSVGETGMVGSPKRREIGHGRLAKRGVLAVMPDMDKFPYTVRVVSEITESNGSSSMASVCGASLALMDAGVPIKAAVAGIAMGLVKEGDNYVVLSDILGDEDHLGDMDFKVAGSRDGISALQMDIKIEGITKEIMQVALNQAKGARLHILGVMEQAINAPRGDISEFAPRIHTIKISTDKIKDVIGKGGSVIRALTEETGTTIEIEDDGTVKIAATDGEKAKYAIRRIEEITAEIEVGRIYNGKVTRIVDFGAFVAIGGGKEGLVHISQIADKRVEKVTDYLQMGQEVPVKVLEVDRQGRVRLSIKEATEQSQPAAAPEAPASEQAE.

Residues D486 and D492 each contribute to the Mg(2+) site. The KH domain maps to 553 to 612 (PRIHTIKISTDKIKDVIGKGGSVIRALTEETGTTIEIEDDGTVKIAATDGEKAKYAIRRI). The 69-residue stretch at 622-690 (GRIYNGKVTR…RQGRVRLSIK (69 aa)) folds into the S1 motif domain. Residues 690-711 (KEATEQSQPAAAPEAPASEQAE) are disordered. Residues 694-711 (EQSQPAAAPEAPASEQAE) show a composition bias toward low complexity.

Belongs to the polyribonucleotide nucleotidyltransferase family. In terms of assembly, component of the RNA degradosome, which is a multiprotein complex involved in RNA processing and mRNA degradation. Mg(2+) serves as cofactor.

It is found in the cytoplasm. The enzyme catalyses RNA(n+1) + phosphate = RNA(n) + a ribonucleoside 5'-diphosphate. Functionally, involved in mRNA degradation. Catalyzes the phosphorolysis of single-stranded polyribonucleotides processively in the 3'- to 5'-direction. This Salmonella choleraesuis (strain SC-B67) protein is Polyribonucleotide nucleotidyltransferase.